A 386-amino-acid chain; its full sequence is D-galactosamine-6-phosphate deaminase AgaS (386 aa).

SIS domains follow at residues 59–217 and 222–366; these read LTPI…CIEM and LTER…PDNP.

This sequence belongs to the SIS family. AgaS subfamily.

It localises to the cytoplasm. The enzyme catalyses D-galactosamine 6-phosphate + H2O = D-tagatopyranose 1-phosphate + NH4(+). It carries out the reaction alpha-D-glucosamine 6-phosphate + H2O = beta-D-fructose 6-phosphate + NH4(+). Functionally, involved in the pathway of N-acetyl-D-galactosamine degradation. Catalyzes the conversion of D-galactosamine 6-phosphate (GalN-6-P) to D-tagatofuranose 6-phosphate (Tag-6-P). It can also catalyze the conversion of D-glucosamine 6-phosphate. The chain is D-galactosamine-6-phosphate deaminase AgaS from Shewanella sp. (strain ANA-3).